Here is a 482-residue protein sequence, read N- to C-terminus: Cytochrome P450 monooxygenase pynD (482 aa).

Residues 1–22 form the signal peptide; that stretch reads MWRIPVIVALVAGLLYWVRKQG. Residue Asn-401 is glycosylated (N-linked (GlcNAc...) asparagine). Heme is bound at residue Cys-417.

Belongs to the cytochrome P450 family. Heme serves as cofactor.

The protein operates within secondary metabolite biosynthesis. Functionally, cytochrome P450 monooxygenase; part of the gene cluster that mediates the biosynthesis of pyranonigrins, a family of antioxidative compounds. The first step of pyranonigrins biosynthesis is performed by the hybrid PKS-NRPS synthetase that condenses 6 malonyl-CoA units to an acetyl starter unit, to form a 1,3,5-trioxotetradecane-6,8-dienyl-ACP. The enoyl reductase (ER) domain of pynA is likely to be functional during the first two rounds of polyketide chain extension, to generate the saturated C-C bonds of the alkyl side chain. PynA subsequently forms the amide bond between the acyl chain and L-serine. Although pynA has a terminal reductase domain, it appears to require the thioesterase pynI for the release of the straight-chain intermediate from pynA via the formation of a tetramic acid pyranonigrin J. The methyltransferase pynC then coverts pyranonigrin J to pyranonigrin I via N-methylation. The FAD-dependent monooxygenase pynG catalyzes an epoxidation-mediated cyclization to form the dihydro-gamma-pyrone moiety, followed by pynD-catalyzed oxidation of the alcohol to the ketone and enolization to yield the characteristic tetramic acid-fused gamma-pyrone core of pyranonigrin H. Pyranonigrin H is substrate of pynH for dehydration-mediated exo-methylene formation from the serine side chain to produce pyranonigrin E, before the oxidase pynE reduces the exo-methylene of pyranonigrin E into a pendant methyl to form pyranonigrin G. The FAD-linked oxidoreductase pynB performs the reverse reaction and converts pyranonigrin G back to pyranonigrin E. The protein is Cytochrome P450 monooxygenase pynD of Aspergillus niger (strain ATCC MYA-4892 / CBS 513.88 / FGSC A1513).